The primary structure comprises 540 residues: Cytochrome P450 27C1 (540 aa).

C486 contributes to the heme binding site.

The protein belongs to the cytochrome P450 family. The cofactor is heme. Following L-thyroxine, expressed in the retinal pigment epithelium (at protein level).

The protein localises to the membrane. It carries out the reaction all-trans-retinol + 2 reduced [adrenodoxin] + O2 + 2 H(+) = all-trans-3,4-didehydroretinol + 2 oxidized [adrenodoxin] + 2 H2O. Efficiently catalyzes the conversion of all-trans retinol (also called vitamin A1, the precursor of 11-cis retinal) to 3,4-didehydroretinol (also called vitamin A2, the precursor of 11-cis 3,4-didehydroretinal). Also acts on all-trans retinal and all-trans retinoic acid. The replacement of 11-cis retinal chromophore in photopigments with 11-cis 3,4-didehydroretinal enhances sensitivity to long-wavelength light. This may improve vision in fresh water which is often turbid. The sequence is that of Cytochrome P450 27C1 (cyp27c1) from Danio rerio (Zebrafish).